The primary structure comprises 429 residues: D-amino acid dehydrogenase (429 aa).

3-17 (VLILGSGVIGTTTAW) provides a ligand contact to FAD.

Belongs to the DadA oxidoreductase family. FAD serves as cofactor.

It catalyses the reaction a D-alpha-amino acid + A + H2O = a 2-oxocarboxylate + AH2 + NH4(+). The protein operates within amino-acid degradation; D-alanine degradation; NH(3) and pyruvate from D-alanine: step 1/1. Oxidative deamination of D-amino acids. The sequence is that of D-amino acid dehydrogenase from Xanthomonas campestris pv. campestris (strain 8004).